The sequence spans 526 residues: AAA ATPase forming ring-shaped complexes (526 aa).

Polar residues predominate over residues 1-18 (MGDMASSTDPAAHNSFSD). Positions 1 to 20 (MGDMASSTDPAAHNSFSDFN) are disordered. Residues 20 to 59 (NREEMTRLADNVRSLQRTNQDLSARNTKLAEMLKSSRDKL) are a coiled coil. 257–262 (GCGKTL) contributes to the ATP binding site.

The protein belongs to the AAA ATPase family. As to quaternary structure, homohexamer. Assembles into a hexameric ring structure.

The chain is AAA ATPase forming ring-shaped complexes from Corynebacterium efficiens (strain DSM 44549 / YS-314 / AJ 12310 / JCM 11189 / NBRC 100395).